We begin with the raw amino-acid sequence, 96 residues long: Muconolactone Delta-isomerase (96 aa).

The protein belongs to the muconolactone Delta-isomerase family. Homodecamer.

The enzyme catalyses (S)-muconolactone = (4,5-dihydro-5-oxofuran-2-yl)-acetate. It functions in the pathway aromatic compound metabolism; beta-ketoadipate pathway; 5-oxo-4,5-dihydro-2-furylacetate from catechol: step 3/3. In Acinetobacter baylyi (strain ATCC 33305 / BD413 / ADP1), this protein is Muconolactone Delta-isomerase (catC).